Reading from the N-terminus, the 262-residue chain is Hydroxyethylthiazole kinase (262 aa).

Met50 contributes to the substrate binding site. Positions 125 and 171 each coordinate ATP. A substrate-binding site is contributed by Gly198.

It belongs to the Thz kinase family. The cofactor is Mg(2+).

It carries out the reaction 5-(2-hydroxyethyl)-4-methylthiazole + ATP = 4-methyl-5-(2-phosphooxyethyl)-thiazole + ADP + H(+). The protein operates within cofactor biosynthesis; thiamine diphosphate biosynthesis; 4-methyl-5-(2-phosphoethyl)-thiazole from 5-(2-hydroxyethyl)-4-methylthiazole: step 1/1. Functionally, catalyzes the phosphorylation of the hydroxyl group of 4-methyl-5-beta-hydroxyethylthiazole (THZ). In Citrobacter koseri (strain ATCC BAA-895 / CDC 4225-83 / SGSC4696), this protein is Hydroxyethylthiazole kinase.